The following is a 1046-amino-acid chain: Phospholipase D zeta 2 (1046 aa).

Residues 45–205 (PKAAIVSVSR…KEVCKFLEVS (161 aa)) form the PX domain. Residues 215–343 (SKMKEGYVTV…WVKAVDEAGC (129 aa)) form the PH domain. Residues 472 to 499 (YLWSHHEKIVIVDYQVCFIGGLDLCFGR) enclose the PLD phosphodiesterase 1 domain. Active-site residues include His-477, Lys-479, and Asp-484. Residues 653 to 667 (GRGDLKLDSGARQDP) are compositionally biased toward basic and acidic residues. Residues 653–677 (GRGDLKLDSGARQDPGETSEESDLD) form a disordered region. The 28-residue stretch at 847 to 874 (SQIYVHSKLMIVDDRIAVIGSSNINDRS) folds into the PLD phosphodiesterase 2 domain. Residues His-852, Lys-854, and Asp-859 contribute to the active site.

It belongs to the phospholipase D family. PXPH-PLD subfamily. The cofactor is Does not require Ca(2+) or any other cation for activity.. Expressed in seedlings, roots, leaves, stems and flowers. Highest expression in roots. Detected only in the meristematic regions up to 4 days after germination and then at later stages in all tissues.

The enzyme catalyses a 1,2-diacyl-sn-glycero-3-phosphocholine + H2O = a 1,2-diacyl-sn-glycero-3-phosphate + choline + H(+). Functionally, hydrolyzes glycerol-phospholipids at the terminal phosphodiesteric bond to generate phosphatidic acids (PA). Phosphatidylcholine-selective. Regulates vesicle trafficking and auxin responses. Required for the normal cycling of PIN-2 containing vesicles. Contributes to the supply of inorganic phosphorus for cell metabolism and diacylglycerol moieties for galactolipid synthesis in phosphorus-starved roots. Involved in root elongation during phosphate limitation. This Arabidopsis thaliana (Mouse-ear cress) protein is Phospholipase D zeta 2.